The sequence spans 433 residues: Voltage-gated potassium channel regulatory subunit KCNG3 (433 aa).

Residues 1–165 (MTFGRGGAAS…RTFEEPTSSL (165 aa)) lie on the Cytoplasmic side of the membrane. Residues 166–187 (AAQILASVSVVFVIVSMVVLCA) traverse the membrane as a helical segment. The Extracellular portion of the chain corresponds to 188–217 (STLPDWRAAVADNRSLDDRSRYSASPGREP). The helical transmembrane segment at 218–239 (SGIIEAICIGWFTAECIVRFIV) threads the bilayer. The Cytoplasmic portion of the chain corresponds to 240–250 (SKNKCEFVKRP). The chain crosses the membrane as a helical span at residues 251–271 (LNIIDLLAITPYYISVLMTVF). Topologically, residues 272-281 (TGENSQLQRA) are extracellular. A helical; Voltage-sensor membrane pass occupies residues 282–302 (GVTLRVLRMMRIFWVIKLARH). Over 303 to 317 (FIGLQTLGLTLKRCY) the chain is Cytoplasmic. Residues 318–339 (REMAMLLVFICVAMAIFSALSQ) traverse the membrane as a helical segment. The Extracellular segment spans residues 340–357 (LLEHGLDLETSNKDFASI). The segment at residues 358–369 (PAACWWVIISMT) is an intramembrane region (helical). Positions 370–375 (TVGYGD) match the Selectivity filter motif. Residues 370–377 (TVGYGDMY) lie within the membrane without spanning it. The Extracellular segment spans residues 378 to 384 (PITVPGR). The chain crosses the membrane as a helical span at residues 385–413 (ILGGVCVVSGIVLLALPITFIYHSFVQCY). The Cytoplasmic segment spans residues 414 to 433 (HELKFRSARYSRSLSAEFLN).

Belongs to the potassium channel family. G (TC 1.A.1.2) subfamily. Kv6.3/KCNG3 sub-subfamily. As to quaternary structure, heterotetramer with KCNB1. Does not form homomultimers.

The protein resides in the cell membrane. It is found in the cytoplasm. Regulatory subunit of the voltage-gated potassium (Kv) channel which, when coassembled with KCNB1, modulates the kinetics parameters of the heterotetrameric channel namely the inactivation and deactivation rate. Potassium channel subunit that does not form functional channels by itself. Reduces the deactivation rate. Moderately acceleratee activation. The polypeptide is Voltage-gated potassium channel regulatory subunit KCNG3 (Mus musculus (Mouse)).